The following is a 114-amino-acid chain: Amphinase-2 (114 aa).

The active-site Proton acceptor is His15. Intrachain disulfides connect Cys26-Cys79, Cys41-Cys85, Cys59-Cys100, and Cys97-Cys114. Asn27 carries N-linked (GlcNAc...) asparagine glycosylation. 42 to 46 lines the substrate pocket; that stretch reads KPINT. Residues Asn67 and Asn91 are each glycosylated (N-linked (GlcNAc...) asparagine). His107 functions as the Proton donor in the catalytic mechanism.

The protein belongs to the pancreatic ribonuclease family. As to quaternary structure, monomer. There are at least four different forms arising from glycan heterogeneity.

The protein resides in the secreted. Functionally, endonuclease, hydrolyzes highly polymerized RNA, poly(U) and poly(C), and the dinucleotides CpA and UpA. Hydrolyzes 18S and 28S ribosomal RNA. More active towards rCA than rUA or rUG. Has cytotoxic activity against cultured human submaxillary gland carcinoma cells. The chain is Amphinase-2 from Lithobates pipiens (Northern leopard frog).